Here is a 168-residue protein sequence, read N- to C-terminus: uncharacterized protein (168 aa).

Residues 14 to 168 form the N-acetyltransferase domain; sequence IDIPLLDAAS…EYKHWIYVTK (155 aa).

The protein belongs to the acetyltransferase family.

This is an uncharacterized protein from Bacillus subtilis (strain 168).